We begin with the raw amino-acid sequence, 139 residues long: Drosulfakinins (139 aa).

The first 35 residues, 1–35 (MGHRGMGCAHFATMAMPLWALTFYLLVVLPVPSQT), serve as a signal peptide directing secretion. The propeptide occupies 36–71 (ASVEVGKEERRLQDLDPKMGSEAGNTDGLSLARFGS). Phe-80 bears the Phenylalanine amide mark. A propeptide spanning residues 81-109 (GHRVPIISRPVIPIELDLLMDNEDDRTMS) is cleaved from the precursor. The residue at position 115 (Tyr-115) is a Sulfotyrosine. Phe-120 is subject to Phenylalanine amide. Sulfotyrosine is present on Tyr-132. At Phe-137 the chain carries Phenylalanine amide.

Belongs to the gastrin/cholecystokinin family.

The protein resides in the secreted. Its function is as follows. Drosulfakinin-0 (DSK 0) plays diverse biological roles including regulating gut muscle contraction in adults but not in larvae. In Drosophila pseudoobscura pseudoobscura (Fruit fly), this protein is Drosulfakinins.